Here is a 276-residue protein sequence, read N- to C-terminus: Diaminopimelate epimerase (276 aa).

Asparagine 13, glutamine 46, and asparagine 66 together coordinate substrate. Cysteine 75 acts as the Proton donor in catalysis. Substrate-binding positions include 76–77, asparagine 159, asparagine 192, and 210–211; these read GN and ER. Cysteine 219 serves as the catalytic Proton acceptor. Residue 220–221 coordinates substrate; the sequence is GT.

The protein belongs to the diaminopimelate epimerase family. In terms of assembly, homodimer.

The protein localises to the cytoplasm. It catalyses the reaction (2S,6S)-2,6-diaminopimelate = meso-2,6-diaminopimelate. It participates in amino-acid biosynthesis; L-lysine biosynthesis via DAP pathway; DL-2,6-diaminopimelate from LL-2,6-diaminopimelate: step 1/1. Functionally, catalyzes the stereoinversion of LL-2,6-diaminopimelate (L,L-DAP) to meso-diaminopimelate (meso-DAP), a precursor of L-lysine and an essential component of the bacterial peptidoglycan. This is Diaminopimelate epimerase from Azotobacter vinelandii (strain DJ / ATCC BAA-1303).